A 383-amino-acid chain; its full sequence is Putative dehydratase subunit YjiM (383 aa).

It belongs to the FldB/FldC dehydratase alpha/beta subunit family.

The protein is Putative dehydratase subunit YjiM (yjiM) of Escherichia coli (strain K12).